A 322-amino-acid chain; its full sequence is Thioredoxin reductase (322 aa).

FAD contacts are provided by residues 12–15, 34–42, Asn51, and Val84; these read SGPA and EGAVTAGGA. Residues Cys136 and Cys139 are joined by a disulfide bond. NADP(+)-binding residues include His176, Arg182, and Tyr259. Residues Asp279 and 286-289 contribute to the FAD site; that span reads RQAI. Position 286 (Arg286) interacts with NADP(+).

Belongs to the class-II pyridine nucleotide-disulfide oxidoreductase family. In terms of assembly, homodimer. It depends on FAD as a cofactor.

It catalyses the reaction [thioredoxin]-dithiol + NADP(+) = [thioredoxin]-disulfide + NADPH + H(+). Its function is as follows. Component of the thioredoxin-thioredoxin reductase system which may be involved in biosynthesis of penicillins and cephalosporins and may be important in determining the thiol-disulfide redox balance. The sequence is that of Thioredoxin reductase from Streptomyces clavuligerus.